The primary structure comprises 230 residues: V-type proton ATPase subunit E1 (230 aa).

Position 1 is an N-acetylmethionine (Met1). A coiled-coil region spans residues 8–67; sequence RQIQQMVRFIRQEAEEKANEISVSAEEEFNIEKLQLVEAEKKKIRQDYEKKEKQADVRKK. Ser178 carries the phosphoserine modification.

This sequence belongs to the V-ATPase E subunit family. V-ATPase is a heteromultimeric enzyme composed of a peripheral catalytic V1 complex (components A to H) attached to an integral membrane V0 proton pore complex (components: a, c, c'', d and e).

It localises to the vacuole membrane. Subunit of the peripheral V1 complex of vacuolar ATPase essential for assembly or catalytic function. V-ATPase is responsible for acidifying a variety of intracellular compartments in eukaryotic cells. Required for Golgi organization and vacuole function in embryogenesis. This is V-type proton ATPase subunit E1 (VHA-E1) from Arabidopsis thaliana (Mouse-ear cress).